The chain runs to 115 residues: SPbeta prophage-derived uncharacterized membrane protein YosE (115 aa).

The next 3 helical transmembrane spans lie at 20–42 (IVVGLLIFVEALTMSLIVYYGLN), 58–78 (VHVTLPHAFVIGVLLNVFVKG), and 95–115 (GKSLFHSTFALIVLYVSTLFI).

Its subcellular location is the cell membrane. The sequence is that of SPbeta prophage-derived uncharacterized membrane protein YosE (yosE) from Bacillus subtilis (strain 168).